The sequence spans 165 residues: Crossover junction endodeoxyribonuclease RuvC (165 aa).

Residues Asp8, Glu69, and His141 contribute to the active site. Mg(2+)-binding residues include Asp8, Glu69, and His141.

It belongs to the RuvC family. In terms of assembly, homodimer which binds Holliday junction (HJ) DNA. The HJ becomes 2-fold symmetrical on binding to RuvC with unstacked arms; it has a different conformation from HJ DNA in complex with RuvA. In the full resolvosome a probable DNA-RuvA(4)-RuvB(12)-RuvC(2) complex forms which resolves the HJ. The cofactor is Mg(2+).

The protein resides in the cytoplasm. It carries out the reaction Endonucleolytic cleavage at a junction such as a reciprocal single-stranded crossover between two homologous DNA duplexes (Holliday junction).. Functionally, the RuvA-RuvB-RuvC complex processes Holliday junction (HJ) DNA during genetic recombination and DNA repair. Endonuclease that resolves HJ intermediates. Cleaves cruciform DNA by making single-stranded nicks across the HJ at symmetrical positions within the homologous arms, yielding a 5'-phosphate and a 3'-hydroxyl group; requires a central core of homology in the junction. The consensus cleavage sequence is 5'-(A/T)TT(C/G)-3'. Cleavage occurs on the 3'-side of the TT dinucleotide at the point of strand exchange. HJ branch migration catalyzed by RuvA-RuvB allows RuvC to scan DNA until it finds its consensus sequence, where it cleaves and resolves the cruciform DNA. This Wolbachia pipientis subsp. Culex pipiens (strain wPip) protein is Crossover junction endodeoxyribonuclease RuvC.